The following is a 320-amino-acid chain: MIDFRPFYQQIATTNLSAWLETLPLQLKQWEKTTHGDYAKWAKIVDFMPNSTACINLKDKVESIPHTPLSVGETKQLTHHLKQLMPWRKGPYHLHGIHIDTEWRSDFKWDRVLPHLAPLKDRTILDVGCGSGYHMWRMVGEGAKMVVGIDPTELFLCQFEVVRKLLGNDRRANLIPLGIEQMQPLAAFDTVFSMGVLYHRKSPLDHLSQLKAQLVKGGELVLETLVIDGDVNTCLVPADRYAKMKNVYFIPSIDCLINWLEKVGFKNVRCVDQAVTTLEEQRKTDWLENESLVDFLDPNDHSKTIEGYPAPKRAVILANA.

Residues Lys89, Trp103, Lys108, Gly128, 150 to 152, 179 to 180, Met194, Tyr198, and Arg313 each bind carboxy-S-adenosyl-L-methionine; these read DPT and IE.

This sequence belongs to the class I-like SAM-binding methyltransferase superfamily. CmoB family. In terms of assembly, homotetramer.

The catalysed reaction is carboxy-S-adenosyl-L-methionine + 5-hydroxyuridine(34) in tRNA = 5-carboxymethoxyuridine(34) in tRNA + S-adenosyl-L-homocysteine + H(+). Catalyzes carboxymethyl transfer from carboxy-S-adenosyl-L-methionine (Cx-SAM) to 5-hydroxyuridine (ho5U) to form 5-carboxymethoxyuridine (cmo5U) at position 34 in tRNAs. The chain is tRNA U34 carboxymethyltransferase from Actinobacillus pleuropneumoniae serotype 3 (strain JL03).